Reading from the N-terminus, the 71-residue chain is Stathmin-1-B (71 aa).

The stretch at 1-67 (KREHEKEVLQ…EIRKGKECKE (67 aa)) forms a coiled coil. The 71-residue stretch at 1 to 71 (KREHEKEVLQ…GKECKEPSED (71 aa)) folds into the SLD domain.

The protein belongs to the stathmin family. Binds to two alpha/beta-tubulin heterodimers. In terms of processing, from unphosphorylated forms to highly phosphorylated ones in the mature egg, followed by progressive dephosphorylation from the mid-blastula to the tailbud stage. As to expression, ubiquitous. Mostly abundant in brain and oocytes.

It is found in the cytoplasm. It localises to the cytoskeleton. Its function is as follows. Involved in the regulation of the microtubule (MT) filament system by destabilizing microtubules. It prevents assembly and promotes disassembly of microtubules. The chain is Stathmin-1-B (stmn1-b) from Xenopus laevis (African clawed frog).